The sequence spans 103 residues: Large ribosomal subunit protein uL23 (103 aa).

This sequence belongs to the universal ribosomal protein uL23 family. In terms of assembly, part of the 50S ribosomal subunit. Contacts protein L29, and trigger factor when it is bound to the ribosome.

Its function is as follows. One of the early assembly proteins it binds 23S rRNA. One of the proteins that surrounds the polypeptide exit tunnel on the outside of the ribosome. Forms the main docking site for trigger factor binding to the ribosome. The sequence is that of Large ribosomal subunit protein uL23 from Chlorobium luteolum (strain DSM 273 / BCRC 81028 / 2530) (Pelodictyon luteolum).